Here is a 183-residue protein sequence, read N- to C-terminus: Oligoribonuclease (183 aa).

An Exonuclease domain is found at 8–171 (LIWLDMEMTG…ADIRESIAEL (164 aa)). Tyr129 is a catalytic residue.

This sequence belongs to the oligoribonuclease family.

It localises to the cytoplasm. Its function is as follows. 3'-to-5' exoribonuclease specific for small oligoribonucleotides. The polypeptide is Oligoribonuclease (Aromatoleum aromaticum (strain DSM 19018 / LMG 30748 / EbN1) (Azoarcus sp. (strain EbN1))).